A 313-amino-acid polypeptide reads, in one-letter code: MKKEQDSNVTEFVLLGLSSSWELQLFLFLLFLFFYIAIVLGNLLIVVTVQAHAHLLQSPMYYFLGHLSFIDLCLSCVTVPKMLGDFLQQGKSISFSGCLAQIYFLHFLGASEMFLLTVMAYDRYVAICNPLRYLTVMNPQLCLWLVLACWCGGFIHSIMQVILVIQLPFCGPNELDNFYCDVPQVIKLACMDTYVVEVLVIANSGLLSLVCFLVLLFSYAIILITLRTHFCQGQNKVFSTCASHLTVVSLIFVPCVFIYLRPFCSFSVDKIFSLFYTVITPMLNPLIYTLRNTDMKTAMKKLRIKPCGIPLPC.

Residues 1-25 lie on the Extracellular side of the membrane; it reads MKKEQDSNVTEFVLLGLSSSWELQL. Asn8 carries N-linked (GlcNAc...) asparagine glycosylation. The helical transmembrane segment at 26–49 threads the bilayer; it reads FLFLLFLFFYIAIVLGNLLIVVTV. At 50-58 the chain is on the cytoplasmic side; that stretch reads QAHAHLLQS. Residues 59-80 traverse the membrane as a helical segment; sequence PMYYFLGHLSFIDLCLSCVTVP. At 81–101 the chain is on the extracellular side; that stretch reads KMLGDFLQQGKSISFSGCLAQ. An intrachain disulfide couples Cys98 to Cys190. A helical transmembrane segment spans residues 102–121; sequence IYFLHFLGASEMFLLTVMAY. Topologically, residues 122-140 are cytoplasmic; sequence DRYVAICNPLRYLTVMNPQ. Residues 141 to 159 form a helical membrane-spanning segment; that stretch reads LCLWLVLACWCGGFIHSIM. At 160 to 196 the chain is on the extracellular side; the sequence is QVILVIQLPFCGPNELDNFYCDVPQVIKLACMDTYVV. A helical transmembrane segment spans residues 197–220; the sequence is EVLVIANSGLLSLVCFLVLLFSYA. Residues 221–236 are Cytoplasmic-facing; it reads IILITLRTHFCQGQNK. Residues 237-259 traverse the membrane as a helical segment; that stretch reads VFSTCASHLTVVSLIFVPCVFIY. At 260–270 the chain is on the extracellular side; it reads LRPFCSFSVDK. Residues 271-290 traverse the membrane as a helical segment; that stretch reads IFSLFYTVITPMLNPLIYTL. Residues 291–313 lie on the Cytoplasmic side of the membrane; sequence RNTDMKTAMKKLRIKPCGIPLPC.

The protein belongs to the G-protein coupled receptor 1 family.

Its subcellular location is the cell membrane. Odorant receptor. This Homo sapiens (Human) protein is Olfactory receptor 4Q3 (OR4Q3).